The following is a 328-amino-acid chain: MAIFEWRHRRRPFDGGGTRRRRFFSPLYSRNFKRTILFAVIFLAIFPPLYFHFKLRRIRQIVAQKCDWLHHPPLVCAHGGDSTLAFPNTMDAYSFAIRSRVDCIEVDVSRSSDGVLFALHNRDLQRIARNSSVQVGDLSMKQIKELDVSEIVKGTLGSSRIPTLEEALALISNSVRKVILDAKVGPPMYEKGLAQDILSIIERAQCNNCIVWAKSDTLARDIIRRAPDTMVGYIVMVDPLTGARNSLLRMKGARVVGVYHPLIDEELVRVVRRRNKEVYAWTVDDADPMKRMLHLGVDAVVTSDPSMFQGLMEDLRTECLEEGFSIRT.

A helical membrane pass occupies residues 35–55 (TILFAVIFLAIFPPLYFHFKL). The GP-PDE domain occupies 73–312 (PLVCAHGGDS…SDPSMFQGLM (240 aa)).

The protein belongs to the glycerophosphoryl diester phosphodiesterase family. In terms of tissue distribution, expressed in rosette and cauline leaves.

The protein resides in the membrane. It carries out the reaction a sn-glycero-3-phosphodiester + H2O = an alcohol + sn-glycerol 3-phosphate + H(+). The chain is Glycerophosphodiester phosphodiesterase GDPD4 from Arabidopsis thaliana (Mouse-ear cress).